The sequence spans 85 residues: MNYLVMISFAFLLMTGVESVRDAYIAQNYNCVYHCARDAYCNELCTKNGAKSGSCPYLGEHKFACYCKDLPDNVPIRVPGKCHRR.

The N-terminal stretch at 1–19 is a signal peptide; it reads MNYLVMISFAFLLMTGVES. The LCN-type CS-alpha/beta domain maps to 21-83; the sequence is RDAYIAQNYN…VPIRVPGKCH (63 aa). Intrachain disulfides connect Cys31/Cys82, Cys35/Cys55, Cys41/Cys65, and Cys45/Cys67. Positions 84–85 are cleaved as a propeptide — removed by a carboxypeptidase; the sequence is RR.

The protein belongs to the long (4 C-C) scorpion toxin superfamily. Sodium channel inhibitor family. Alpha subfamily. Expressed by the venom gland.

The protein localises to the secreted. In terms of biological role, alpha toxins bind voltage-independently at site-3 of sodium channels (Nav) and inhibit the inactivation of the activated channels, thereby blocking neuronal transmission. Shows a high toxicity toward insects and moderate toxicity against mammals. This Olivierus martensii (Manchurian scorpion) protein is Toxin BmKaIT1.